Reading from the N-terminus, the 361-residue chain is Phospho-N-acetylmuramoyl-pentapeptide-transferase (361 aa).

A run of 10 helical transmembrane segments spans residues 25-45 (TGGAMVTGALFVFMFGPWIID), 72-92 (TPTMGGLMILSGLTVGTVLWA), 95-115 (LNPYVWIVLAVTLGFGFVGFY), 135-155 (LLIEFIIAGAACFALVWLGRA), 169-189 (VMLNLGWAFVVFGAFVVVGAG), 200-220 (GLAIVPVMIAAASFGLISYLA), 240-260 (LAVLCGALLGAGLGFLWFNAP), 264-284 (IFMGDTGSLALGGMLGSIAVA), 289-309 (IVLAVIGGLFVLEAVSVIVQV), and 338-358 (QIVIRFWIIAVMLALAGLSTL).

This sequence belongs to the glycosyltransferase 4 family. MraY subfamily. Mg(2+) is required as a cofactor.

The protein resides in the cell inner membrane. It catalyses the reaction UDP-N-acetyl-alpha-D-muramoyl-L-alanyl-gamma-D-glutamyl-meso-2,6-diaminopimeloyl-D-alanyl-D-alanine + di-trans,octa-cis-undecaprenyl phosphate = di-trans,octa-cis-undecaprenyl diphospho-N-acetyl-alpha-D-muramoyl-L-alanyl-D-glutamyl-meso-2,6-diaminopimeloyl-D-alanyl-D-alanine + UMP. Its pathway is cell wall biogenesis; peptidoglycan biosynthesis. Functionally, catalyzes the initial step of the lipid cycle reactions in the biosynthesis of the cell wall peptidoglycan: transfers peptidoglycan precursor phospho-MurNAc-pentapeptide from UDP-MurNAc-pentapeptide onto the lipid carrier undecaprenyl phosphate, yielding undecaprenyl-pyrophosphoryl-MurNAc-pentapeptide, known as lipid I. This Rhodopseudomonas palustris (strain TIE-1) protein is Phospho-N-acetylmuramoyl-pentapeptide-transferase.